Here is a 241-residue protein sequence, read N- to C-terminus: Spiralin (241 aa).

The N-terminal stretch at 1 to 23 (MKKLLSILAVFGVSAVGTTSVVA) is a signal peptide. Cys24 is lipidated: N-palmitoyl cysteine. Cys24 carries S-diacylglycerol cysteine lipidation.

This sequence belongs to the spiralin family. In terms of assembly, seems to occur as dimer, tetramers, and large oligomers of identical chains. Palmitate and stearate are the major lipid components.

The protein resides in the cell membrane. Its function is as follows. Major membrane protein of spiroplasma. In Spiroplasma citri, this protein is Spiralin (spi).